Consider the following 561-residue polypeptide: Putative transport protein DNO_0009 (561 aa).

Helical transmembrane passes span 4–24, 29–49, 74–94, 104–124, and 166–186; these read VAIT…LGNI, VGLS…IMNL, FGLI…FFAS, AFAA…YYLF, and MGYA…MWLI. RCK C-terminal domains are found at residues 198-283 and 285-369; these read LQFF…ILGE and AGHE…LIGN. 6 consecutive transmembrane segments (helical) span residues 379 to 399, 411 to 433, 447 to 467, 472 to 492, 501 to 521, and 538 to 558; these read MLPV…PIYL, AGGP…LYWF, IVLF…STLL, FSWI…AGII, YLTI…LAFA, and VYPL…VLLW.

Belongs to the AAE transporter (TC 2.A.81) family. YidE subfamily.

The protein localises to the cell membrane. The protein is Putative transport protein DNO_0009 of Dichelobacter nodosus (strain VCS1703A).